Reading from the N-terminus, the 257-residue chain is Exosome complex component mtr3 (257 aa).

It belongs to the RNase PH family. Component of the RNA exosome complex. Specifically part of the catalytically inactive RNA exosome core complex (Exo-9) may associate with the catalytic subunits rrp6 and dis3 in cytoplasmic- and nuclear-specific RNA exosome complex forms. Exo-9 is formed by a hexameric base ring of RNase PH domain-containing subunits and a cap ring consisting of csl4, rrp4 and rrp40.

It localises to the cytoplasm. The protein resides in the nucleus. It is found in the nucleolus. Its function is as follows. Non-catalytic component of the RNA exosome complex which has 3'-&gt;5' exoribonuclease activity and participates in a multitude of cellular RNA processing and degradation events. In the nucleus, the RNA exosome complex is involved in proper maturation of stable RNA species such as rRNA, snRNA and snoRNA, in the elimination of RNA processing by-products and non-coding 'pervasive' transcripts, such as antisense RNA species and cryptic unstable transcripts (CUTs), and of mRNAs with processing defects, thereby limiting or excluding their export to the cytoplasm. In the cytoplasm, the RNA exosome complex is involved in general mRNA turnover and in RNA surveillance pathways, preventing translation of aberrant mRNAs. The catalytic inactive RNA exosome core complex of 9 subunits (Exo-9) is proposed to play a pivotal role in the binding and presentation of RNA for ribonucleolysis, and to serve as a scaffold for the association with catalytic subunits and accessory proteins or complexes. ski6 is part of the hexameric ring of RNase PH domain-containing subunits proposed to form a central channel which threads RNA substrates for degradation. In Schizosaccharomyces pombe (strain 972 / ATCC 24843) (Fission yeast), this protein is Exosome complex component mtr3 (mtr3).